Here is a 143-residue protein sequence, read N- to C-terminus: Large ribosomal subunit protein uL11 (143 aa).

It belongs to the universal ribosomal protein uL11 family. In terms of assembly, part of the ribosomal stalk of the 50S ribosomal subunit. Interacts with L10 and the large rRNA to form the base of the stalk. L10 forms an elongated spine to which L12 dimers bind in a sequential fashion forming a multimeric L10(L12)X complex. Post-translationally, one or more lysine residues are methylated.

In terms of biological role, forms part of the ribosomal stalk which helps the ribosome interact with GTP-bound translation factors. The chain is Large ribosomal subunit protein uL11 from Burkholderia multivorans (strain ATCC 17616 / 249).